A 263-amino-acid chain; its full sequence is Tryptophan 2,3-dioxygenase (263 aa).

Substrate is bound by residues Phe-32–His-36, Tyr-94, and Arg-98. His-221 is a binding site for heme. Thr-235 is a substrate binding site.

This sequence belongs to the tryptophan 2,3-dioxygenase family. As to quaternary structure, homotetramer. Heme is required as a cofactor.

The catalysed reaction is L-tryptophan + O2 = N-formyl-L-kynurenine. It participates in amino-acid degradation; L-tryptophan degradation via kynurenine pathway; L-kynurenine from L-tryptophan: step 1/2. In terms of biological role, heme-dependent dioxygenase that catalyzes the oxidative cleavage of the L-tryptophan (L-Trp) pyrrole ring and converts L-tryptophan to N-formyl-L-kynurenine. Catalyzes the oxidative cleavage of the indole moiety. The protein is Tryptophan 2,3-dioxygenase of Erythrobacter litoralis (strain HTCC2594).